The primary structure comprises 588 residues: Protein cereblon (588 aa).

2 disordered regions span residues 1–107 (MDDE…DDSD) and 159–197 (QERR…DIGF). A compositionally biased stretch (polar residues) spans 41 to 50 (AWNNATQDEQ). The span at 75–85 (MVEDVLQDDTA) shows a compositional bias: acidic residues. The span at 86–96 (SEGSHPSSDMS) shows a compositional bias: polar residues. Basic and acidic residues predominate over residues 159–168 (QERRRSRTSE). A compositionally biased stretch (pro residues) spans 181–192 (NDPPPQQPPRPP). One can recognise a Lon N-terminal domain in the interval 228–454 (HMLIFLHQHI…LIKSTFKDES (227 aa)). One can recognise a CULT domain in the interval 453 to 562 (ESLFFCRYCN…LAGSSVRIGK (110 aa)). The Zn(2+) site is built by C458, C461, C527, and C530.

It belongs to the CRBN family. As to quaternary structure, likely a component of a DCX (DDB1-CUL4-X-box) protein ligase complex. May interact with pic/DDB1. In terms of processing, ubiquitinated.

The protein localises to the nucleus. It participates in protein modification; protein ubiquitination. In terms of biological role, substrate recognition component of a DCX (DDB1-CUL4-X-box) E3 protein ligase complex that mediates the ubiquitination and subsequent proteasomal degradation of target proteins. Has an essential role in mediating growth by negatively regulating insulin signaling. It also has a role in maintaining presynaptic function in the neuromuscular junction synapses of third-instar larvae. The sequence is that of Protein cereblon from Drosophila yakuba (Fruit fly).